Reading from the N-terminus, the 92-residue chain is Large ribosomal subunit protein eL43 (92 aa).

Zn(2+) contacts are provided by Cys-39, Cys-42, Cys-57, and Cys-60. The segment at 39-60 (CSFCGKTKMKRRAVGIWHCGSC) adopts a C4-type zinc-finger fold.

This sequence belongs to the eukaryotic ribosomal protein eL43 family. Component of the large ribosomal subunit.

Its subcellular location is the cytoplasm. In terms of biological role, component of the large ribosomal subunit. The ribosome is a large ribonucleoprotein complex responsible for the synthesis of proteins in the cell. The sequence is that of Large ribosomal subunit protein eL43 (rpl37a) from Ictalurus punctatus (Channel catfish).